Consider the following 1694-residue polypeptide: Immunoglobulin A1 protease autotransporter (1694 aa).

The first 25 residues, 1-25 (MLNKKFKLNFIALTVAYALTPYTEA), serve as a signal peptide directing secretion. Residues 26–332 (ALVRDDVDYQ…NIYKPEFAKT (307 aa)) form the Peptidase S6 domain. Ser288 is a catalytic residue. Positions 991–1403 (VEKRNQTVDT…GSDRSTVALR (413 aa)) are disordered. Polar residues predominate over residues 997-1021 (TVDTTNITTPNNIQADVPSVPSNNE). The span at 1037–1047 (TPSETTETVAE) shows a compositional bias: low complexity. Positions 1049–1061 (SKQESKTVEKNEQ) are enriched in basic and acidic residues. Residues 1082-1095 (KANTQTNEVAQSGS) show a composition bias toward polar residues. Basic and acidic residues-rich tracts occupy residues 1104-1124 (EIKE…KDEI) and 1142-1154 (APKE…KVEE). Composition is skewed to polar residues over residues 1155-1178 (TQVQ…SPNS) and 1199-1210 (VSKNQTENTTDQ). The span at 1211 to 1226 (PTEREKTAKVETEKTQ) shows a compositional bias: basic and acidic residues. Composition is skewed to polar residues over residues 1227–1247 (EPPQ…TVQP), 1255–1297 (NVPT…TAIT), and 1308–1336 (TETA…NSES). The span at 1352 to 1370 (ETSAEETTAASTDETTIAD) shows a compositional bias: low complexity. Positions 1374 to 1384 (RSKPNRRSRRS) are enriched in basic residues. The Autotransporter domain maps to 1442–1694 (NNEGQYNVWV…TAELKLSFSF (253 aa)).

Its subcellular location is the periplasm. The protein localises to the secreted. It localises to the cell surface. The protein resides in the cell outer membrane. The enzyme catalyses Cleavage of immunoglobulin A molecules at certain Pro-|-Xaa bonds in the hinge region. No small molecule substrates are known.. Its function is as follows. Virulence factor; cleaves host immunoglobulin A producing intact Fc and Fab fragments. The protein is Immunoglobulin A1 protease autotransporter (iga) of Haemophilus influenzae (strain ATCC 51907 / DSM 11121 / KW20 / Rd).